The chain runs to 418 residues: UDP-N-acetyl-D-mannosamine dehydrogenase (418 aa).

Tyr10, Ile11, Asp30, Thr85, and Thr119 together coordinate NAD(+). UDP-N-acetyl-alpha-D-mannosaminouronate contacts are provided by Arg152, Val153, Lys204, Asn208, Arg211, His242, Arg244, Thr249, and Gly255. Lys204 acts as the Proton donor/acceptor in catalysis. The active-site Nucleophile is the Cys258. Lys261 contributes to the NAD(+) binding site. Tyr318 and Lys319 together coordinate UDP-N-acetyl-alpha-D-mannosaminouronate. Arg326 serves as a coordination point for NAD(+). Arg398 is a binding site for UDP-N-acetyl-alpha-D-mannosaminouronate.

Belongs to the UDP-glucose/GDP-mannose dehydrogenase family. As to quaternary structure, homodimer.

The enzyme catalyses UDP-N-acetyl-alpha-D-mannosamine + 2 NAD(+) + H2O = UDP-N-acetyl-alpha-D-mannosaminouronate + 2 NADH + 3 H(+). Its function is as follows. Catalyzes the four-electron oxidation of UDP-N-acetyl-D-mannosamine (UDP-ManNAc), reducing NAD(+) and releasing UDP-N-acetylmannosaminuronic acid (UDP-ManNAcA). The chain is UDP-N-acetyl-D-mannosamine dehydrogenase from Pyrococcus horikoshii (strain ATCC 700860 / DSM 12428 / JCM 9974 / NBRC 100139 / OT-3).